The primary structure comprises 954 residues: Endogenous retrovirus group K member 25 Pol protein (954 aa).

The Reverse transcriptase domain occupies 57–245 (LEKGHIEPSF…TPFHYLGMQI (189 aa)). The short motif at 161–164 (LPQG) is the LPQG element. Residues 195 to 198 (YIDD) carry the YXDD motif. One can recognise an RNase H type-1 domain in the interval 460-588 (LENALTVFTD…ADLLVSSALI (129 aa)). Positions 469, 497, 515, and 580 each coordinate Mg(2+). The segment at 585 to 626 (SALIKAQELHALTHVNAAGLKNKFDVTWKLAKDIVQHCTQCQ) adopts an Integrase-type zinc-finger fold. Residues histidine 594, histidine 598, cysteine 622, and cysteine 625 each coordinate Zn(2+). In terms of domain architecture, Integrase catalytic spans 640–801 (RGLCPNALWQ…TSAEQHLTGK (162 aa)). Positions 809–857 (KLIWWKDNKNKTWEIGKVITWGRGFACVSPGENQLPVWIPTRHLKFYNE) form a DNA-binding region, integrase-type. The segment at 862 to 888 (AKKSTSAETETPQSSTVDSQDEQNGDV) is disordered. Residues 867–879 (SAETETPQSSTVD) are compositionally biased toward polar residues.

This sequence belongs to the beta type-B retroviral polymerase family. HERV class-II K(HML-2) pol subfamily.

The catalysed reaction is DNA(n) + a 2'-deoxyribonucleoside 5'-triphosphate = DNA(n+1) + diphosphate. It catalyses the reaction Endonucleolytic cleavage to 5'-phosphomonoester.. Functionally, early post-infection, the reverse transcriptase converts the viral RNA genome into double-stranded viral DNA. The RNase H domain of the reverse transcriptase performs two functions. It degrades the RNA template and specifically removes the RNA primer from the RNA/DNA hybrid. Following nuclear import, the integrase catalyzes the insertion of the linear, double-stranded viral DNA into the host cell chromosome. Endogenous Pol proteins may have kept, lost or modified their original function during evolution. The chain is Endogenous retrovirus group K member 25 Pol protein (ERVK-25) from Homo sapiens (Human).